The sequence spans 70 residues: Eglin C (70 aa).

It belongs to the protease inhibitor I13 (potato type I serine protease inhibitor) family.

Its function is as follows. Inhibits both elastase and cathepsin G. The protein is Eglin C of Hirudo medicinalis (Medicinal leech).